We begin with the raw amino-acid sequence, 192 residues long: Late embryogenesis abundant protein 47 (192 aa).

Positions 5–9 match the Nuclear localization signal (NLS) motif; that stretch reads QLQKP. 2 consecutive SMP domains span residues 68 to 125 and 133 to 190; these read ITIG…LNAR and TTLA…RINQ. The segment at 146-174 is disordered; sequence LPSDKAATRKDAEGVTGAEMRNDPHLTTY. A compositionally biased stretch (basic and acidic residues) spans 147–158; it reads PSDKAATRKDAE.

It belongs to the LEA type SMP family.

It localises to the cytoplasm. It is found in the nucleus. LEA proteins are late embryonic proteins abundant in higher plant seed embryos. The function of those proteins is not known. The sequence is that of Late embryogenesis abundant protein 47 from Arabidopsis thaliana (Mouse-ear cress).